A 208-amino-acid chain; its full sequence is Protein-L-isoaspartate O-methyltransferase (208 aa).

Ser-59 is an active-site residue.

This sequence belongs to the methyltransferase superfamily. L-isoaspartyl/D-aspartyl protein methyltransferase family.

Its subcellular location is the cytoplasm. The enzyme catalyses [protein]-L-isoaspartate + S-adenosyl-L-methionine = [protein]-L-isoaspartate alpha-methyl ester + S-adenosyl-L-homocysteine. In terms of biological role, catalyzes the methyl esterification of L-isoaspartyl residues in peptides and proteins that result from spontaneous decomposition of normal L-aspartyl and L-asparaginyl residues. It plays a role in the repair and/or degradation of damaged proteins. The chain is Protein-L-isoaspartate O-methyltransferase from Vibrio parahaemolyticus serotype O3:K6 (strain RIMD 2210633).